The chain runs to 72 residues: MNNSMINPSIVDLLKKVENRYTLVTMTAKRARQLIEGSEALVDIDSTKPVTIAIKEISDRAITYETVKEGIK.

It belongs to the RNA polymerase subunit omega family. The RNAP catalytic core consists of 2 alpha, 1 beta, 1 beta' and 1 omega subunit. When a sigma factor is associated with the core the holoenzyme is formed, which can initiate transcription.

It carries out the reaction RNA(n) + a ribonucleoside 5'-triphosphate = RNA(n+1) + diphosphate. Promotes RNA polymerase assembly. Latches the N- and C-terminal regions of the beta' subunit thereby facilitating its interaction with the beta and alpha subunits. This Clostridium kluyveri (strain NBRC 12016) protein is DNA-directed RNA polymerase subunit omega.